The primary structure comprises 860 residues: Alanine--tRNA ligase (860 aa).

Zn(2+) contacts are provided by histidine 553, histidine 557, cysteine 655, and histidine 659.

Belongs to the class-II aminoacyl-tRNA synthetase family. Zn(2+) serves as cofactor.

It localises to the cytoplasm. The enzyme catalyses tRNA(Ala) + L-alanine + ATP = L-alanyl-tRNA(Ala) + AMP + diphosphate. Catalyzes the attachment of alanine to tRNA(Ala) in a two-step reaction: alanine is first activated by ATP to form Ala-AMP and then transferred to the acceptor end of tRNA(Ala). Also edits incorrectly charged Ser-tRNA(Ala) and Gly-tRNA(Ala) via its editing domain. In Legionella pneumophila (strain Corby), this protein is Alanine--tRNA ligase.